The primary structure comprises 76 residues: Acyl carrier protein (76 aa).

In terms of domain architecture, Carrier spans 1–76 (MSIEERVKKI…SAIDYVQNNQ (76 aa)). Residue Ser36 is modified to O-(pantetheine 4'-phosphoryl)serine.

Belongs to the acyl carrier protein (ACP) family. Post-translationally, 4'-phosphopantetheine is transferred from CoA to a specific serine of apo-ACP by AcpS. This modification is essential for activity because fatty acids are bound in thioester linkage to the sulfhydryl of the prosthetic group.

It is found in the cytoplasm. Its pathway is lipid metabolism; fatty acid biosynthesis. Functionally, carrier of the growing fatty acid chain in fatty acid biosynthesis. The chain is Acyl carrier protein from Pasteurella multocida (strain Pm70).